The chain runs to 126 residues: Holo-[acyl-carrier-protein] synthase (126 aa).

Aspartate 9 and glutamate 57 together coordinate Mg(2+).

The protein belongs to the P-Pant transferase superfamily. AcpS family. Mg(2+) is required as a cofactor.

Its subcellular location is the cytoplasm. The catalysed reaction is apo-[ACP] + CoA = holo-[ACP] + adenosine 3',5'-bisphosphate + H(+). Its function is as follows. Transfers the 4'-phosphopantetheine moiety from coenzyme A to a Ser of acyl-carrier-protein. In Pseudoalteromonas atlantica (strain T6c / ATCC BAA-1087), this protein is Holo-[acyl-carrier-protein] synthase.